A 96-amino-acid polypeptide reads, in one-letter code: ATP synthase subunit c (96 aa).

2 consecutive transmembrane segments (helical) span residues 26–46 (GLVL…CGIG) and 68–88 (IMVT…YALV).

This sequence belongs to the ATPase C chain family. In terms of assembly, F-type ATPases have 2 components, F(1) - the catalytic core - and F(0) - the membrane proton channel. F(1) has five subunits: alpha(3), beta(3), gamma(1), delta(1), epsilon(1). F(0) has three main subunits: a(1), b(2) and c(10-14). The alpha and beta chains form an alternating ring which encloses part of the gamma chain. F(1) is attached to F(0) by a central stalk formed by the gamma and epsilon chains, while a peripheral stalk is formed by the delta and b chains.

Its subcellular location is the cell inner membrane. F(1)F(0) ATP synthase produces ATP from ADP in the presence of a proton or sodium gradient. F-type ATPases consist of two structural domains, F(1) containing the extramembraneous catalytic core and F(0) containing the membrane proton channel, linked together by a central stalk and a peripheral stalk. During catalysis, ATP synthesis in the catalytic domain of F(1) is coupled via a rotary mechanism of the central stalk subunits to proton translocation. Functionally, key component of the F(0) channel; it plays a direct role in translocation across the membrane. A homomeric c-ring of between 10-14 subunits forms the central stalk rotor element with the F(1) delta and epsilon subunits. The sequence is that of ATP synthase subunit c from Oleidesulfovibrio alaskensis (strain ATCC BAA-1058 / DSM 17464 / G20) (Desulfovibrio alaskensis).